A 216-amino-acid polypeptide reads, in one-letter code: Probable GTP-binding protein EngB (216 aa).

Residues 30 to 204 (SGLEVAFAGR…QMVLAGWLDL (175 aa)) form the EngB-type G domain. GTP is bound by residues 38–45 (GRSNAGKS), 64–68 (GRTQL), 82–85 (DLPG), 149–152 (TKAD), and 182–185 (LFSA). Residues Ser45 and Thr66 each coordinate Mg(2+).

Belongs to the TRAFAC class TrmE-Era-EngA-EngB-Septin-like GTPase superfamily. EngB GTPase family. The cofactor is Mg(2+).

Functionally, necessary for normal cell division and for the maintenance of normal septation. The sequence is that of Probable GTP-binding protein EngB from Ectopseudomonas mendocina (strain ymp) (Pseudomonas mendocina).